The following is a 586-amino-acid chain: Dynein axonemal assembly factor 3 (586 aa).

Residues 455–493 are disordered; that stretch reads PGGGDSAVESGPAPSKVESTRAPLPESISPPQANQAPSL.

It belongs to the DNAAF3 family.

The protein localises to the cytoplasm. It is found in the dynein axonemal particle. Its function is as follows. Required for the assembly of axonemal inner and outer dynein arms. Involved in preassembly of dyneins into complexes before their transport into cilia. The chain is Dynein axonemal assembly factor 3 (Dnaaf3) from Mus musculus (Mouse).